Reading from the N-terminus, the 295-residue chain is Phosphonoacetaldehyde hydrolase (295 aa).

D36 acts as the Nucleophile in catalysis. Residues D36 and A38 each coordinate Mg(2+). The active-site Schiff-base intermediate with substrate is K78. Position 212 (D212) interacts with Mg(2+).

The protein belongs to the HAD-like hydrolase superfamily. PhnX family. In terms of assembly, homodimer. Mg(2+) is required as a cofactor.

It carries out the reaction phosphonoacetaldehyde + H2O = acetaldehyde + phosphate + H(+). Involved in phosphonate degradation. This is Phosphonoacetaldehyde hydrolase from Psychromonas ingrahamii (strain DSM 17664 / CCUG 51855 / 37).